The sequence spans 449 residues: Histone PARylation factor 1-like (449 aa).

A CCHC-type zinc finger spans residues 3–28 (KEDCKYWDKCYQQNPAHLSKYNHPKK). A disordered region spans residues 18–93 (AHLSKYNHPK…AKGSYEAETE (76 aa)). Composition is skewed to basic and acidic residues over residues 28 to 41 (KQQEHEVDGAEGKK) and 54 to 69 (EQKKEEQTEPVNKDKS). A Phosphoserine modification is found at S72. Catalysis depends on E384, which acts as the Proton donor.

The protein belongs to the HPF1 family.

The protein localises to the chromosome. It is found in the nucleus. Its function is as follows. Cofactor for serine ADP-ribosylation that confers serine specificity on Parp. Switches the amino acid specificity of Parp from aspartate or glutamate to serine residues. Acts by completing the active site of Parp: forms a composite active site composed of residues from HPF1/CG1218 and Parp. The protein is Histone PARylation factor 1-like of Drosophila melanogaster (Fruit fly).